We begin with the raw amino-acid sequence, 224 residues long: MSFLPDFGIFTMGMWSVGLGAVGAAITGIVLANTDLFLSKPEKATLEFLEAIELKTLGSEPRTFKASELWKKNGAVIMAVRRPGUFLCREEASELSSLKPQLSKLGVPLYAVVKEKIGTEVEDFQHYFQGEIFLDEKRSFYGPRKRKMMLSGFFRIGVWQNFFRAWKNGYSGNLEGEGFTLGGVYVIGAGRQGILLEHREKEFGDKVSLPSVLEAAEKIKPQAS.

Residues 14-112 form a thioredoxin fold region; that stretch reads MWSVGLGAVG…SKLGVPLYAV (99 aa). Position 85 (U85) is a non-standard amino acid, selenocysteine. C88 functions as the Redox-active in the catalytic mechanism.

It belongs to the peroxiredoxin-like PRXL2 family. PRXL2A subfamily.

It localises to the cytoplasm. Involved in redox regulation of the cell. Acts as an antioxidant. Inhibits TNFSF11-induced NFKB1 and JUN activation and osteoclast differentiation. May affect bone resorption and help to maintain bone mass. This is Peroxiredoxin-like 2A (PRXL2A) from Gallus gallus (Chicken).